The following is a 208-amino-acid chain: Thymidylate kinase (208 aa).

10–17 (GPEGSGKT) provides a ligand contact to ATP.

It belongs to the thymidylate kinase family.

It carries out the reaction dTMP + ATP = dTDP + ADP. In terms of biological role, phosphorylation of dTMP to form dTDP in both de novo and salvage pathways of dTTP synthesis. The polypeptide is Thymidylate kinase (Bacillus cereus (strain ATCC 14579 / DSM 31 / CCUG 7414 / JCM 2152 / NBRC 15305 / NCIMB 9373 / NCTC 2599 / NRRL B-3711)).